The primary structure comprises 126 residues: Actin-depolymerizing factor (126 aa).

Residues 1–126 (EDNCKLKFLE…SFDIIKSRAL (126 aa)) form the ADF-H domain.

Belongs to the actin-binding proteins ADF family. Preferentially in mature anther.

In terms of biological role, actin-depolymerizing protein. Severs actin filaments (F-actin) and binds to actin monomers. This is Actin-depolymerizing factor from Brassica napus (Rape).